The following is a 378-amino-acid chain: UDP-4-amino-4-deoxy-L-arabinose--oxoglutarate aminotransferase (378 aa).

Lys-182 is subject to N6-(pyridoxal phosphate)lysine.

The protein belongs to the DegT/DnrJ/EryC1 family. ArnB subfamily. As to quaternary structure, homodimer. Requires pyridoxal 5'-phosphate as cofactor.

It carries out the reaction UDP-4-amino-4-deoxy-beta-L-arabinose + 2-oxoglutarate = UDP-beta-L-threo-pentopyranos-4-ulose + L-glutamate. Its pathway is nucleotide-sugar biosynthesis; UDP-4-deoxy-4-formamido-beta-L-arabinose biosynthesis; UDP-4-deoxy-4-formamido-beta-L-arabinose from UDP-alpha-D-glucuronate: step 2/3. It participates in bacterial outer membrane biogenesis; lipopolysaccharide biosynthesis. Catalyzes the conversion of UDP-4-keto-arabinose (UDP-Ara4O) to UDP-4-amino-4-deoxy-L-arabinose (UDP-L-Ara4N). The modified arabinose is attached to lipid A and is required for resistance to polymyxin and cationic antimicrobial peptides. The chain is UDP-4-amino-4-deoxy-L-arabinose--oxoglutarate aminotransferase from Aeromonas hydrophila subsp. hydrophila (strain ATCC 7966 / DSM 30187 / BCRC 13018 / CCUG 14551 / JCM 1027 / KCTC 2358 / NCIMB 9240 / NCTC 8049).